The chain runs to 388 residues: AdoMet-dependent heme synthase (388 aa).

Low complexity predominate over residues 1–12 (MHNANHPHGNGH). Residues 1–29 (MHNANHPHGNGHPAEKKGMGAHSGAMNMP) form a disordered region. In terms of domain architecture, Radical SAM core spans 34–257 (DGSPACRLIA…TSMHLKATCA (224 aa)). Residues cysteine 50, cysteine 54, and cysteine 57 each coordinate [4Fe-4S] cluster.

The protein belongs to the radical SAM superfamily. The cofactor is [4Fe-4S] cluster.

It catalyses the reaction Fe-coproporphyrin III + 2 S-adenosyl-L-methionine = heme b + 2 5'-deoxyadenosine + 2 L-methionine + 2 CO2. It participates in porphyrin-containing compound metabolism; protoheme biosynthesis. Involved in siroheme-dependent heme b biosynthesis. Catalyzes the conversion of Fe-coproporphyrin III into heme by the oxidative decarboxylation of two propionate side chains. This Oleidesulfovibrio alaskensis (strain ATCC BAA-1058 / DSM 17464 / G20) (Desulfovibrio alaskensis) protein is AdoMet-dependent heme synthase.